The sequence spans 192 residues: 3-hydroxyanthranilate 3,4-dioxygenase (192 aa).

An O2-binding site is contributed by arginine 50. The Fe cation site is built by histidine 54, glutamate 60, and histidine 102. Residue glutamate 60 participates in substrate binding. The substrate site is built by arginine 106 and glutamate 116. The a divalent metal cation site is built by cysteine 131, cysteine 134, cysteine 168, and cysteine 171.

Belongs to the 3-HAO family. Fe(2+) is required as a cofactor.

The protein resides in the cytoplasm. It carries out the reaction 3-hydroxyanthranilate + O2 = (2Z,4Z)-2-amino-3-carboxymuconate 6-semialdehyde. Its pathway is cofactor biosynthesis; NAD(+) biosynthesis; quinolinate from L-kynurenine: step 3/3. Its function is as follows. Catalyzes the oxidative ring opening of 3-hydroxyanthranilate to 2-amino-3-carboxymuconate semialdehyde, which spontaneously cyclizes to quinolinate. The protein is 3-hydroxyanthranilate 3,4-dioxygenase of Coccidioides immitis (strain RS) (Valley fever fungus).